A 316-amino-acid polypeptide reads, in one-letter code: 1-phosphofructokinase (316 aa).

ATP contacts are provided by residues 225-230 (SMGAGG) and 256-257 (GD). The Proton acceptor role is filled by Asp-257.

Belongs to the carbohydrate kinase PfkB family.

The enzyme catalyses beta-D-fructose 1-phosphate + ATP = beta-D-fructose 1,6-bisphosphate + ADP + H(+). Catalyzes the ATP-dependent phosphorylation of fructose-l-phosphate to fructose-l,6-bisphosphate. This is 1-phosphofructokinase from Rhodobacter capsulatus (Rhodopseudomonas capsulata).